The primary structure comprises 61 residues: Small ribosomal subunit protein uS14 (61 aa).

Cys24, Cys27, Cys40, and Cys43 together coordinate Zn(2+).

The protein belongs to the universal ribosomal protein uS14 family. Zinc-binding uS14 subfamily. In terms of assembly, part of the 30S ribosomal subunit. Contacts proteins S3 and S10. Zn(2+) is required as a cofactor.

In terms of biological role, binds 16S rRNA, required for the assembly of 30S particles and may also be responsible for determining the conformation of the 16S rRNA at the A site. This Syntrophobacter fumaroxidans (strain DSM 10017 / MPOB) protein is Small ribosomal subunit protein uS14.